Consider the following 283-residue polypeptide: Bifunctional protein FolD (283 aa).

NADP(+) contacts are provided by residues 164–166 (GRS), Ser-189, and Ile-230.

It belongs to the tetrahydrofolate dehydrogenase/cyclohydrolase family. As to quaternary structure, homodimer.

The enzyme catalyses (6R)-5,10-methylene-5,6,7,8-tetrahydrofolate + NADP(+) = (6R)-5,10-methenyltetrahydrofolate + NADPH. It carries out the reaction (6R)-5,10-methenyltetrahydrofolate + H2O = (6R)-10-formyltetrahydrofolate + H(+). Its pathway is one-carbon metabolism; tetrahydrofolate interconversion. Functionally, catalyzes the oxidation of 5,10-methylenetetrahydrofolate to 5,10-methenyltetrahydrofolate and then the hydrolysis of 5,10-methenyltetrahydrofolate to 10-formyltetrahydrofolate. The sequence is that of Bifunctional protein FolD from Lacticaseibacillus paracasei (strain ATCC 334 / BCRC 17002 / CCUG 31169 / CIP 107868 / KCTC 3260 / NRRL B-441) (Lactobacillus paracasei).